The sequence spans 317 residues: Melanocyte-stimulating hormone receptor (317 aa).

Residues 1–37 (MPVQGSQRRLLGSLNSTPTATPHLGLAANQTGARCLE) are Extracellular-facing. Asn29 is a glycosylation site (N-linked (GlcNAc...) asparagine). The helical transmembrane segment at 38–63 (VSIPDGLFLSLGLVSLVENVLVVTAI) threads the bilayer. Topologically, residues 64 to 72 (AKNRNLHSP) are cytoplasmic. A helical transmembrane segment spans residues 73-93 (MYCFICCLALSDLLVSGSNML). Residues 94–118 (ETAVTLLLEAGALAARAAVVQQLDN) lie on the Extracellular side of the membrane. The chain crosses the membrane as a helical span at residues 119 to 140 (VIDVITCSSMLSSLCFLGAIAV). Topologically, residues 141–163 (DRYISIFYALRYHSIVTLPRARR) are cytoplasmic. A helical transmembrane segment spans residues 164–183 (AVAAIWVASVLFSMLFIAYY). Residues 184–191 (DHAAVLLC) lie on the Extracellular side of the membrane. A helical transmembrane segment spans residues 192-211 (LVVFFLAMLVLMAVLYVHML). The Cytoplasmic portion of the chain corresponds to 212–240 (ARACQHAQGIARLHKRQRPAHQGFGLKGA). The helical transmembrane segment at 241–266 (ATLTILLGIFFLCWGPFFLHLTLIVL) threads the bilayer. Residues 267 to 279 (CPQHPTCSCIFKN) are Extracellular-facing. The helical transmembrane segment at 280 to 300 (FNLFLALIICNAIIDPLIYAF) threads the bilayer. Residues 301–317 (RSQELRRTLKEVLLCSW) are Cytoplasmic-facing. The S-palmitoyl cysteine moiety is linked to residue Cys315.

Belongs to the G-protein coupled receptor 1 family. As to quaternary structure, interacts with MGRN1, but does not undergo MGRN1-mediated ubiquitination; this interaction competes with GNAS-binding and thus inhibits agonist-induced cAMP production. Interacts with OPN3; the interaction results in a decrease in MC1R-mediated cAMP signaling and ultimately a decrease in melanin production in melanocytes.

The protein resides in the cell membrane. Functionally, receptor for MSH (alpha, beta and gamma) and ACTH. The activity of this receptor is mediated by G proteins which activate adenylate cyclase. Mediates melanogenesis, the production of eumelanin (black/brown) and phaeomelanin (red/yellow), via regulation of cAMP signaling in melanocytes. The chain is Melanocyte-stimulating hormone receptor (MC1R) from Miopithecus talapoin (Angolan talapoin).